The following is a 371-amino-acid chain: Histidinol-phosphate aminotransferase (371 aa).

The residue at position 232 (K232) is an N6-(pyridoxal phosphate)lysine.

It belongs to the class-II pyridoxal-phosphate-dependent aminotransferase family. Histidinol-phosphate aminotransferase subfamily. Homodimer. The cofactor is pyridoxal 5'-phosphate.

The catalysed reaction is L-histidinol phosphate + 2-oxoglutarate = 3-(imidazol-4-yl)-2-oxopropyl phosphate + L-glutamate. It participates in amino-acid biosynthesis; L-histidine biosynthesis; L-histidine from 5-phospho-alpha-D-ribose 1-diphosphate: step 7/9. This Methylibium petroleiphilum (strain ATCC BAA-1232 / LMG 22953 / PM1) protein is Histidinol-phosphate aminotransferase.